Consider the following 3623-residue polypeptide: Cubilin (3623 aa).

A signal peptide spans 1–20 (MSSQFLWGFVTLLMIAELDG). The propeptide at 21 to 32 (KTGKPEQRGQKR) is removed in mature form. The tract at residues 39 to 46 (PRMTTEEG) is interaction with AMN. Asparagine 95 carries N-linked (GlcNAc...) asparagine glycosylation. Residues 129 to 165 (ERKVCSSNPCLNGGTCVNLHDSFVCICPSQWKGLFCS) form the EGF-like 1 domain. 9 disulfide bridges follow: cysteine 133–cysteine 144, cysteine 138–cysteine 153, cysteine 155–cysteine 164, cysteine 171–cysteine 187, cysteine 181–cysteine 196, cysteine 198–cysteine 207, cysteine 264–cysteine 277, cysteine 271–cysteine 286, and cysteine 289–cysteine 300. An EGF-like 2; calcium-binding domain is found at 167–208 (DVNECVVYSGTPFGCQSGSTCVNTVGSFRCDCTPDTYGPQCA). An EGF-like 3; calcium-binding domain is found at 260-301 (DKDECSLQPSPCSEHAQCFNTQGSFYCGACPKGWQGNGYECQ). The region spanning 302–345 (DINECEINNGGCSQAPLVPCLNTPGSFSCGNCPAGFSGDGRVCT) is the EGF-like 4; calcium-binding domain. EGF-like domains follow at residues 346–385 (PVDI…YTGN) and 395–430 (LSNI…QNCT). 13 cysteine pairs are disulfide-bonded: cysteine 350-cysteine 363, cysteine 357-cysteine 376, cysteine 399-cysteine 409, cysteine 404-cysteine 418, cysteine 420-cysteine 429, cysteine 436-cysteine 447, cysteine 441-cysteine 456, cysteine 458-cysteine 467, cysteine 474-cysteine 500, cysteine 527-cysteine 549, cysteine 590-cysteine 616, cysteine 643-cysteine 665, and cysteine 708-cysteine 734. N-linked (GlcNAc...) asparagine glycosylation occurs at asparagine 428. Positions 432–468 (NINDCSSNPCLNGGTCIDGINGFTCDCTSSWTGYYCQ) constitute an EGF-like 7; calcium-binding domain. CUB domains lie at 474–586 (CGGI…WEAK), 590–702 (CGGI…YLTT), 708–816 (CGGN…YQVA), 817–928 (CGGM…FSSD), 932–1042 (CGEV…YEAI), 1048–1161 (CLYD…WDGS), 1165–1277 (CGGN…FRQR), 1278–1389 (CDNV…WFTH), 1391–1506 (CGGE…WRAV), 1510–1619 (CGGI…FREE), 1620–1734 (CGGR…YSAS), 1738–1850 (CGGS…FKNI), 1852–1963 (GNNN…WFAV), 1978–2091 (CGGF…FHKS), 2092–2213 (CGGY…YEAK), 2217–2334 (CGGT…YSIA), 2336–2448 (CGGT…FKSS), 2452–2565 (CGGD…YTST), 2570–2687 (CGGF…YSFT), 2689–2801 (CGGI…WTTN), 2805–2919 (CGGT…FISR), 2920–3035 (CGRT…YRAI), 3037–3150 (CGGI…FRET), 3157–3274 (CGGY…YTFV), 3278–3393 (CGGT…YQIA), 3395–3507 (CNRE…WTSS), and 3511–3623 (CGGT…MWSS). A glycan (N-linked (GlcNAc...) asparagine) is linked at asparagine 491. Asparagine 711 and asparagine 749 each carry an N-linked (GlcNAc...) asparagine glycan. Cysteine 761 and cysteine 779 are disulfide-bonded. Residue asparagine 781 is glycosylated (N-linked (GlcNAc...) asparagine). The cysteines at positions 817 and 842 are disulfide-linked. The N-linked (GlcNAc...) asparagine glycan is linked to asparagine 857. Intrachain disulfides connect cysteine 869/cysteine 891 and cysteine 932/cysteine 958. Asparagine 957 is a glycosylation site (N-linked (GlcNAc...) asparagine). Glutamate 980 provides a ligand contact to Ca(2+). Residue asparagine 984 is glycosylated (N-linked (GlcNAc...) asparagine). An intrachain disulfide couples cysteine 985 to cysteine 1005. Ca(2+) contacts are provided by aspartate 988, aspartate 1027, and leucine 1030. A disulfide bond links cysteine 1048 and cysteine 1074. Residues glutamate 1096, aspartate 1105, and aspartate 1146 each contribute to the Ca(2+) site. Cysteine 1165 and cysteine 1191 are disulfide-bonded. The N-linked (GlcNAc...) asparagine glycan is linked to asparagine 1168. Residues glutamate 1213, aspartate 1221, aspartate 1262, glycine 1264, and glutamine 1265 each contribute to the Ca(2+) site. A disulfide bridge connects residues cysteine 1218 and cysteine 1240. A disulfide bridge links cysteine 1278 with cysteine 1306. N-linked (GlcNAc...) asparagine glycosylation is found at asparagine 1285, asparagine 1307, and asparagine 1319. Glutamate 1328 contributes to the Ca(2+) binding site. N-linked (GlcNAc...) asparagine glycosylation is present at asparagine 1332. Cysteines 1333 and 1351 form a disulfide. 3 residues coordinate Ca(2+): aspartate 1336, aspartate 1373, and isoleucine 1375. 2 disulfides stabilise this stretch: cysteine 1391/cysteine 1417 and cysteine 1444/cysteine 1466. A glycan (N-linked (GlcNAc...) asparagine) is linked at asparagine 1500. Cysteine 1510 and cysteine 1536 are oxidised to a cystine. N-linked (GlcNAc...) asparagine glycosylation is found at asparagine 1551, asparagine 1646, and asparagine 1671. A disulfide bridge links cysteine 1620 with cysteine 1647. Disulfide bonds link cysteine 1675-cysteine 1697, cysteine 1738-cysteine 1764, and cysteine 1791-cysteine 1812. N-linked (GlcNAc...) asparagine glycans are attached at residues asparagine 1802 and asparagine 1819. Cystine bridges form between cysteine 1905-cysteine 1927, cysteine 1978-cysteine 2006, and cysteine 2032-cysteine 2054. Residues asparagine 2085 and asparagine 2117 are each glycosylated (N-linked (GlcNAc...) asparagine). Disulfide bonds link cysteine 2092–cysteine 2118 and cysteine 2217–cysteine 2247. The N-linked (GlcNAc...) asparagine glycan is linked to asparagine 2274. Cystine bridges form between cysteine 2275/cysteine 2297, cysteine 2336/cysteine 2363, cysteine 2390/cysteine 2411, cysteine 2452/cysteine 2478, and cysteine 2505/cysteine 2527. Asparagine 2400 carries an N-linked (GlcNAc...) asparagine glycan. Residues asparagine 2531, asparagine 2581, and asparagine 2610 are each glycosylated (N-linked (GlcNAc...) asparagine). The cysteines at positions 2570 and 2599 are disulfide-linked. 7 disulfides stabilise this stretch: cysteine 2628–cysteine 2649, cysteine 2689–cysteine 2715, cysteine 2742–cysteine 2764, cysteine 2805–cysteine 2831, cysteine 2860–cysteine 2883, cysteine 2920–cysteine 2946, and cysteine 2977–cysteine 2999. Residues asparagine 2813, asparagine 2875, asparagine 2945, and asparagine 2989 are each glycosylated (N-linked (GlcNAc...) asparagine). Position 3008 is a phosphothreonine (threonine 3008). Cystine bridges form between cysteine 3037-cysteine 3064 and cysteine 3091-cysteine 3113. Residues asparagine 3042, asparagine 3106, asparagine 3125, and asparagine 3165 are each glycosylated (N-linked (GlcNAc...) asparagine). 2 cysteine pairs are disulfide-bonded: cysteine 3157–cysteine 3185 and cysteine 3215–cysteine 3237. N-linked (GlcNAc...) asparagine glycosylation is found at asparagine 3268, asparagine 3283, and asparagine 3290. 2 disulfide bridges follow: cysteine 3278–cysteine 3306 and cysteine 3332–cysteine 3354. N-linked (GlcNAc...) asparagine glycosylation is found at asparagine 3357, asparagine 3400, and asparagine 3430. An intrachain disulfide couples cysteine 3395 to cysteine 3421. 3 disulfides stabilise this stretch: cysteine 3448-cysteine 3470, cysteine 3511-cysteine 3537, and cysteine 3564-cysteine 3586. A glycan (N-linked (GlcNAc...) asparagine) is linked at asparagine 3533.

In terms of assembly, interacts with AMN. Component of the cubam complex composed of one CUBN trimer and one AMN chain. The cubam complex can dimerize. Interacts with LRP2 in a dual-receptor complex in a calcium-dependent manner. Found in a complex with PID1/PCLI1, LRP1 and CUBNI. Interacts with LRP1 and PID1/PCLI1. In terms of processing, the precursor is cleaved by a trans-Golgi proteinase furin, removing a propeptide. Post-translationally, N-glycosylated. As to expression, expressed to intestinal, renal and yalk sac apical membranes. In kidney, expressed in the proximal tubule.

The protein localises to the cell membrane. The protein resides in the endosome membrane. Its subcellular location is the lysosome membrane. In terms of biological role, endocytic receptor which plays a role in lipoprotein, vitamin and iron metabolism by facilitating their uptake. Acts together with LRP2 to mediate endocytosis of high-density lipoproteins, GC, hemoglobin, ALB, TF and SCGB1A1. Acts together with AMN to mediate endocytosis of the CBLIF-cobalamin complex. Binds to ALB, MB, Kappa and lambda-light chains, TF, hemoglobin, GC, SCGB1A1, APOA1, high density lipoprotein, and the CBLIF-cobalamin complex. Ligand binding requires calcium. Serves as important transporter in several absorptive epithelia, including intestine, renal proximal tubules and embryonic yolk sac. May play an important role in the development of the peri-implantation embryo through internalization of APOA1 and cholesterol. Binds to LGALS3 at the maternal-fetal interface. This Rattus norvegicus (Rat) protein is Cubilin (Cubn).